The primary structure comprises 734 residues: NAD(P)H-quinone oxidoreductase subunit 5, chloroplastic (734 aa).

12 consecutive transmembrane segments (helical) span residues 9–29 (WIIP…LFFF), 40–60 (YAII…DLLW), 89–109 (IDPL…TVMI), 121–140 (YVRF…GLVI), 144–166 (LIQI…GFWF), 185–205 (GDFG…SFKF), 219–239 (HEVS…GPVA), 258–278 (TPIS…FLVA), 289–311 (LVMS…VALA), 318–338 (VLAY…GIGS), 395–415 (GTTF…ACFW), and 425–445 (WLYF…TGFY). The interval 512-534 (DKNVKNSVSTQSSREEYSPHPKE) is disordered. Residues 524–534 (SREEYSPHPKE) show a composition bias toward basic and acidic residues. Transmembrane regions (helical) follow at residues 539 to 559 (MLFP…IGVP), 601 to 621 (VGTA…IPFF), and 707 to 727 (ISYY…VVIN).

It belongs to the complex I subunit 5 family. NDH is composed of at least 16 different subunits, 5 of which are encoded in the nucleus.

Its subcellular location is the plastid. It is found in the chloroplast thylakoid membrane. It carries out the reaction a plastoquinone + NADH + (n+1) H(+)(in) = a plastoquinol + NAD(+) + n H(+)(out). The enzyme catalyses a plastoquinone + NADPH + (n+1) H(+)(in) = a plastoquinol + NADP(+) + n H(+)(out). NDH shuttles electrons from NAD(P)H:plastoquinone, via FMN and iron-sulfur (Fe-S) centers, to quinones in the photosynthetic chain and possibly in a chloroplast respiratory chain. The immediate electron acceptor for the enzyme in this species is believed to be plastoquinone. Couples the redox reaction to proton translocation, and thus conserves the redox energy in a proton gradient. In Huperzia lucidula (Shining clubmoss), this protein is NAD(P)H-quinone oxidoreductase subunit 5, chloroplastic (ndhF).